The chain runs to 335 residues: Nucleoid-associated protein PputGB1_0980 (335 aa).

The protein belongs to the YejK family.

It localises to the cytoplasm. Its subcellular location is the nucleoid. The chain is Nucleoid-associated protein PputGB1_0980 from Pseudomonas putida (strain GB-1).